The sequence spans 442 residues: Sexual development regulator VELC (442 aa).

Disordered stretches follow at residues 1-192 (MPVH…ASLA) and 396-442 (KKGN…IRRS). The segment covering 45 to 54 (IAPPPPPTPP) has biased composition (pro residues). Residues 79–97 (PGPRRPSNPSSPQHPQQPG) show a composition bias toward low complexity. The Velvet domain occupies 213 to 396 (FSTSEYHLHV…KEQGCLISIK (184 aa)). The span at 401–411 (KGGGGGGGGPS) shows a compositional bias: gly residues. The span at 433–442 (AGKRKRIRRS) shows a compositional bias: basic residues.

The protein belongs to the velvet family. VelC subfamily.

It is found in the nucleus. Its function is as follows. Velvet-domain-containing protein that acts as a positive regulator of sexual development. Plays an important role in pathogenicity through regulating positively appressorium-mediated penetration and invasive growth. The polypeptide is Sexual development regulator VELC (Pyricularia oryzae (strain 70-15 / ATCC MYA-4617 / FGSC 8958) (Rice blast fungus)).